A 340-amino-acid chain; its full sequence is MSEKNAYAKSGVDVEAGYEVVERIKKHVARTERAGVMGALGGFGGMFDLSKTGVREPVLVSGTDGVGTKLMLAIKYDKHDTIGQDCVAMCVNDIIAAGAEPLYFLDYVATGKNNPVKFEEVVSGVAEGCVQAGAALIGGETAEMPGMYGEDDYDLAGFAVGVAEKSQLIDGSKVKEGDILLGLASSGIHSNGYSLVRRVFADYTGKELLPELEGKQLKDVLLEPTRIYVRAALPLIKEELVNGIGHITGGGFIENVPRMFADDLAAEIDEDKVPVLPIFKALEKYGDIKHEEMFEIFNMGVGLMLAVSPENVNRVKELLDEPVYEIGRIIKKADDSVVIK.

The protein belongs to the AIR synthase family.

The protein localises to the cytoplasm. The enzyme catalyses 2-formamido-N(1)-(5-O-phospho-beta-D-ribosyl)acetamidine + ATP = 5-amino-1-(5-phospho-beta-D-ribosyl)imidazole + ADP + phosphate + H(+). Its pathway is purine metabolism; IMP biosynthesis via de novo pathway; 5-amino-1-(5-phospho-D-ribosyl)imidazole from N(2)-formyl-N(1)-(5-phospho-D-ribosyl)glycinamide: step 2/2. This is Phosphoribosylformylglycinamidine cyclo-ligase from Streptococcus pyogenes serotype M12 (strain MGAS2096).